The primary structure comprises 124 residues: Large ribosomal subunit protein bL17 (124 aa).

The protein belongs to the bacterial ribosomal protein bL17 family. As to quaternary structure, part of the 50S ribosomal subunit. Contacts protein L32.

The sequence is that of Large ribosomal subunit protein bL17 from Trichlorobacter lovleyi (strain ATCC BAA-1151 / DSM 17278 / SZ) (Geobacter lovleyi).